A 132-amino-acid polypeptide reads, in one-letter code: Ribosome-binding factor A (132 aa).

It belongs to the RbfA family. In terms of assembly, monomer. Binds 30S ribosomal subunits, but not 50S ribosomal subunits or 70S ribosomes.

Its subcellular location is the cytoplasm. In terms of biological role, one of several proteins that assist in the late maturation steps of the functional core of the 30S ribosomal subunit. Associates with free 30S ribosomal subunits (but not with 30S subunits that are part of 70S ribosomes or polysomes). Required for efficient processing of 16S rRNA. May interact with the 5'-terminal helix region of 16S rRNA. The sequence is that of Ribosome-binding factor A from Burkholderia cenocepacia (strain ATCC BAA-245 / DSM 16553 / LMG 16656 / NCTC 13227 / J2315 / CF5610) (Burkholderia cepacia (strain J2315)).